Here is a 932-residue protein sequence, read N- to C-terminus: Protein translocase subunit SecA, chloroplastic (932 aa).

Residue 95–102 (MRTGEGKT) coordinates ATP. A compositionally biased stretch (basic and acidic residues) spans 632–641 (HESRRVDNQL). The segment at 632–653 (HESRRVDNQLRGRSGRQGDPGS) is disordered.

It belongs to the SecA family.

Its subcellular location is the plastid. The protein resides in the chloroplast stroma. The protein localises to the chloroplast thylakoid membrane. It carries out the reaction ATP + H2O + chloroplast-proteinSide 1 = ADP + phosphate + chloroplast-proteinSide 2.. In terms of biological role, has a central role in coupling the hydrolysis of ATP to the transfer of proteins across the thylakoid membrane. This Ostreococcus lucimarinus (strain CCE9901) protein is Protein translocase subunit SecA, chloroplastic.